We begin with the raw amino-acid sequence, 674 residues long: ATP-dependent DNA helicase Hel308 (674 aa).

ATP contacts are provided by residues Gln27 and 44 to 51; that span reads VPTAAGKT. Positions 31-197 constitute a Helicase ATP-binding domain; sequence IEQFRKGKNI…WLNASLIKSS (167 aa). Positions 142–145 match the DEAH box motif; it reads DEIH. The region spanning 224 to 411 is the Helicase C-terminal domain; the sequence is DINLLVKETV…PEKVRFNTLA (188 aa).

This sequence belongs to the helicase family. Hel308 subfamily. Monomer.

The enzyme catalyses Couples ATP hydrolysis with the unwinding of duplex DNA by translocating in the 3'-5' direction.. It carries out the reaction ATP + H2O = ADP + phosphate + H(+). Functionally, DNA-dependent ATPase and 3'-5' DNA helicase that may be involved in repair of stalled replication forks. The chain is ATP-dependent DNA helicase Hel308 from Thermoplasma volcanium (strain ATCC 51530 / DSM 4299 / JCM 9571 / NBRC 15438 / GSS1).